Consider the following 315-residue polypeptide: MLKMESTQQMAVSIINSSFEAAVVAATSALENMGIEYDYQDIYSRVKNKFDFVMDDSGVKNNLIGKAITIDQALNNKFGSAIRNRNWLADTSRAAKLDEDVNKLRMMLSSKGIDQKMRVLNACFSVKRIPGKSSSIIKCTKLMRDKLERGEVEVDDSFVDEKMEVDTIDWKSRYEQLEQRFESLKSRVNEKYNNWVLKARKMNENMHSLQNVISQQQAHIAELQVYNNKLERDLQNKIGSLTSSIEWYLRSMELDPEIKADIEQQINSIDAINPLHAFDDLESVIRNLISDYDKLFLMFKGLIQRCNYQYSFGCE.

Residues 1–149 (MLKMESTQQM…TKLMRDKLER (149 aa)) are RNA-binding. Residues 150–206 (GEVEVDDSFVDEKMEVDTIDWKSRYEQLEQRFESLKSRVNEKYNNWVLKARKMNENM) are dimerization. The stretch at 166-237 (DTIDWKSRYE…NKLERDLQNK (72 aa)) forms a coiled coil. The segment at 170–234 (WKSRYEQLEQ…VYNNKLERDL (65 aa)) is interaction with host ZC3H7B. The tract at residues 208–315 (SLQNVISQQQ…CNYQYSFGCE (108 aa)) is interaction with host EIF4G1.

This sequence belongs to the rotavirus NSP3 family. As to quaternary structure, homodimer. Interacts (via the coiled-coil region) with host ZC3H7B (via LD motif). Interacts with host EIF4G1.

It localises to the host cytoplasm. Plays an important role in stimulating the translation of viral mRNAs. These mRNAs are capped but not polyadenylated, instead terminating in a conserved sequence 'GACC' at the 3' that is recognized by NSP3, which competes with host PABPC1 for EIF4G1 binding. The interaction between NSP3 and host EIF4G1 stabilizes the EIF4E-EIF4G1 interaction, thereby facilitating the initiation of capped mRNA translation. The sequence is that of Non-structural protein 3 from Rotavirus A (isolate RVA/Monkey/South Africa/SA11-H96/1958/G3P5B[2]) (RV-A).